Consider the following 693-residue polypeptide: DNA-directed RNA polymerase subunit beta' (693 aa).

C76, C78, C94, and C97 together coordinate Zn(2+). Residues D496, D498, and D500 each contribute to the Mg(2+) site.

It belongs to the RNA polymerase beta' chain family. RpoC1 subfamily. In plastids the minimal PEP RNA polymerase catalytic core is composed of four subunits: alpha, beta, beta', and beta''. When a (nuclear-encoded) sigma factor is associated with the core the holoenzyme is formed, which can initiate transcription. The cofactor is Mg(2+). Zn(2+) is required as a cofactor.

The protein localises to the plastid. It is found in the chloroplast. It carries out the reaction RNA(n) + a ribonucleoside 5'-triphosphate = RNA(n+1) + diphosphate. Functionally, DNA-dependent RNA polymerase catalyzes the transcription of DNA into RNA using the four ribonucleoside triphosphates as substrates. In Nuphar advena (Common spatterdock), this protein is DNA-directed RNA polymerase subunit beta'.